The following is a 214-amino-acid chain: Urease accessory protein UreG (214 aa).

GTP is bound at residue 23–30 (GPVGSGKT).

Belongs to the SIMIBI class G3E GTPase family. UreG subfamily. Homodimer. UreD, UreF and UreG form a complex that acts as a GTP-hydrolysis-dependent molecular chaperone, activating the urease apoprotein by helping to assemble the nickel containing metallocenter of UreC. The UreE protein probably delivers the nickel.

It localises to the cytoplasm. Facilitates the functional incorporation of the urease nickel metallocenter. This process requires GTP hydrolysis, probably effectuated by UreG. This chain is Urease accessory protein UreG, found in Bordetella pertussis (strain Tohama I / ATCC BAA-589 / NCTC 13251).